An 89-amino-acid polypeptide reads, in one-letter code: MALSVEEKAQIVNEYKQAEGDTGSPEVQVALLSANINKLQDHFKANGKDHHSRRGLIRMVNQRRKLLDYLKGKDVSRYTALIGRLGLRR.

This sequence belongs to the universal ribosomal protein uS15 family. In terms of assembly, part of the 30S ribosomal subunit. Forms a bridge to the 50S subunit in the 70S ribosome, contacting the 23S rRNA.

One of the primary rRNA binding proteins, it binds directly to 16S rRNA where it helps nucleate assembly of the platform of the 30S subunit by binding and bridging several RNA helices of the 16S rRNA. Its function is as follows. Forms an intersubunit bridge (bridge B4) with the 23S rRNA of the 50S subunit in the ribosome. The polypeptide is Small ribosomal subunit protein uS15 (Pseudomonas aeruginosa (strain LESB58)).